We begin with the raw amino-acid sequence, 157 residues long: S-ribosylhomocysteine lyase (157 aa).

Histidine 54, histidine 58, and cysteine 124 together coordinate Fe cation.

Belongs to the LuxS family. In terms of assembly, homodimer. The cofactor is Fe cation.

It catalyses the reaction S-(5-deoxy-D-ribos-5-yl)-L-homocysteine = (S)-4,5-dihydroxypentane-2,3-dione + L-homocysteine. Functionally, involved in the synthesis of autoinducer 2 (AI-2) which is secreted by bacteria and is used to communicate both the cell density and the metabolic potential of the environment. The regulation of gene expression in response to changes in cell density is called quorum sensing. Catalyzes the transformation of S-ribosylhomocysteine (RHC) to homocysteine (HC) and 4,5-dihydroxy-2,3-pentadione (DPD). In Lactobacillus helveticus (strain DPC 4571), this protein is S-ribosylhomocysteine lyase.